The sequence spans 373 residues: Coiled-coil domain-containing protein 34 (373 aa).

Disordered regions lie at residues 1 to 112 (MWAA…SLRG) and 118 to 137 (CASTQVESENNQEEQKQVRL). Ser-52 is subject to Phosphoserine. Residues 61-76 (NSTRSLLSPLGHQSFQ) show a composition bias toward polar residues. The span at 77–101 (FDEDDGDGEDEEDVDDEEDVDEDAH) shows a compositional bias: acidic residues. The stretch at 152-286 (KEKEERDRLQ…QEWLENAKHK (135 aa)) forms a coiled coil. A disordered region spans residues 324-352 (IHMPPPKEAKDLSGRKSKRPVISQPHKSS). Positions 328–337 (PPKEAKDLSG) are enriched in basic and acidic residues.

As to expression, expressed in sperm.

The protein resides in the cell projection. It is found in the cilium. The protein localises to the flagellum. Involved in spermatogenesis. Has a probable role in anterograde intraflagellar transport which is essential for the formation of sperm flagella. This chain is Coiled-coil domain-containing protein 34 (CCDC34), found in Homo sapiens (Human).